A 348-amino-acid polypeptide reads, in one-letter code: Phosphoribosylformylglycinamidine cyclo-ligase (348 aa).

This sequence belongs to the AIR synthase family.

Its subcellular location is the cytoplasm. The enzyme catalyses 2-formamido-N(1)-(5-O-phospho-beta-D-ribosyl)acetamidine + ATP = 5-amino-1-(5-phospho-beta-D-ribosyl)imidazole + ADP + phosphate + H(+). The protein operates within purine metabolism; IMP biosynthesis via de novo pathway; 5-amino-1-(5-phospho-D-ribosyl)imidazole from N(2)-formyl-N(1)-(5-phospho-D-ribosyl)glycinamide: step 2/2. This is Phosphoribosylformylglycinamidine cyclo-ligase from Citrifermentans bemidjiense (strain ATCC BAA-1014 / DSM 16622 / JCM 12645 / Bem) (Geobacter bemidjiensis).